We begin with the raw amino-acid sequence, 120 residues long: Large ribosomal subunit protein uL18 (120 aa).

The protein belongs to the universal ribosomal protein uL18 family. In terms of assembly, part of the 50S ribosomal subunit; part of the 5S rRNA/L5/L18/L25 subcomplex. Contacts the 5S and 23S rRNAs.

In terms of biological role, this is one of the proteins that bind and probably mediate the attachment of the 5S RNA into the large ribosomal subunit, where it forms part of the central protuberance. In Rhodopseudomonas palustris (strain BisB18), this protein is Large ribosomal subunit protein uL18.